A 237-amino-acid polypeptide reads, in one-letter code: Ribose-5-phosphate isomerase A (237 aa).

Substrate contacts are provided by residues 30 to 33 (SGST), 87 to 90 (DGAD), and 100 to 103 (KGGG). Glutamate 109 functions as the Proton acceptor in the catalytic mechanism. Lysine 127 contacts substrate.

It belongs to the ribose 5-phosphate isomerase family. Homodimer.

The catalysed reaction is aldehydo-D-ribose 5-phosphate = D-ribulose 5-phosphate. The protein operates within carbohydrate degradation; pentose phosphate pathway; D-ribose 5-phosphate from D-ribulose 5-phosphate (non-oxidative stage): step 1/1. In terms of biological role, catalyzes the reversible conversion of ribose-5-phosphate to ribulose 5-phosphate. In Synechococcus sp. (strain RCC307), this protein is Ribose-5-phosphate isomerase A.